The following is a 601-amino-acid chain: Glutathione-regulated potassium-efflux system protein KefB (601 aa).

The next 13 helical transmembrane spans lie at 4–24 (SDFL…VPLA), 29–49 (IGAV…GLGF), 55–75 (EILH…GLEL), 87–107 (IFGV…GLLM), 115–135 (AAVV…LQLM), 152–172 (VLLF…LLAG), 177–197 (HFDW…LIGG), 207–227 (FIAA…LVLG), 230–250 (LFMD…GVLL), 268–288 (GLLL…GVLY), 291–311 (LLWV…VLYL), 324–344 (MQFA…FSTA), and 356–376 (ALLL…MKLV). An RCK N-terminal domain is found at 400-519 (KPQVIVVGFG…AGVTQFSRET (120 aa)).

This sequence belongs to the monovalent cation:proton antiporter 2 (CPA2) transporter (TC 2.A.37) family. KefB subfamily. In terms of assembly, interacts with the regulatory subunit KefG.

It is found in the cell inner membrane. Functionally, pore-forming subunit of a potassium efflux system that confers protection against electrophiles. Catalyzes K(+)/H(+) antiport. In Escherichia coli O81 (strain ED1a), this protein is Glutathione-regulated potassium-efflux system protein KefB.